The sequence spans 285 residues: MKYIGAHVSAAGGLANAAIRAAEIDATAFALFTKNQRQWRAAPLTTQTIDEFKAACEKYHYTSAQILPHDSYLINLGHPVAEALEKSRDAFIDEMQRCEQLGLSLLNFHPGSHLMQISEEDCLARIAESINIALDKTEGVTAVIENTAGQGSNLGFKFEHLAAIIAGVEDKSRVGVCIDTCHAFAAGYDLRTPAECEKTFAEFERIVGFKYLRGMHLNDAKSTFGSRVDRHHSLGEGNIGHDAFRWIMQDARFDGIPLILETINPDIWAEEIAWLKAQQTEKAVA.

His69, His109, Glu145, Asp179, His182, His216, Asp229, His231, and Glu261 together coordinate Zn(2+).

It belongs to the AP endonuclease 2 family. The cofactor is Zn(2+).

The catalysed reaction is Endonucleolytic cleavage to 5'-phosphooligonucleotide end-products.. Functionally, endonuclease IV plays a role in DNA repair. It cleaves phosphodiester bonds at apurinic or apyrimidinic (AP) sites, generating a 3'-hydroxyl group and a 5'-terminal sugar phosphate. The polypeptide is Probable endonuclease 4 (Escherichia fergusonii (strain ATCC 35469 / DSM 13698 / CCUG 18766 / IAM 14443 / JCM 21226 / LMG 7866 / NBRC 102419 / NCTC 12128 / CDC 0568-73)).